The primary structure comprises 478 residues: MVSKTQKADLGPQLPEKKKKKKKKKRVVANVSEPETQYSVLNSNDYFIDASPPRATSPSNNVDEVQIPEISLSKRKKKKKSCSTHLEECLGAEPTRARQKKSPSPRRQALEQSAEGLIREKKKKRRKSLSKAASQGSGLKTSPDPKHAKEVSKAGRKSKKQRKEKKVPDTEALPPQDAWLYEAGDSLHSCLEGAEAEEQAALGQKRKQGSPRDHNMKKKKKTHQEGDILLVNSRVSVENSLKKGSKKSVKSEALEFVPIDSPKAPGKKKVKSKKKVEQPVGEGLAVKRKKKKKKRKENGVKEDPWQEEKEESDTDLEVVLEKKGNMDETCIDQVRRKALQEEIDRESGKTEASEPKKWTVGLSVKTEASEPKKWTGTQFGQWDTAGFENEEQKLKFLKLMGGFKHLSPSFSRPPSMTIRSNMALDKKSSEMLQQSLQQDYDRAMSWKYSHGAGLGFNSEARKVFYIDRNASKSIKLQD.

A disordered region spans residues 1–231; sequence MVSKTQKADL…THQEGDILLV (231 aa). A Glycyl lysine isopeptide (Lys-Gly) (interchain with G-Cter in SUMO2) cross-link involves residue Lys7. Positions 17–27 are enriched in basic residues; that stretch reads KKKKKKKKKRV. Polar residues predominate over residues 33–45; the sequence is EPETQYSVLNSND. Phosphoserine occurs at positions 51 and 59. The span at 54–63 shows a compositional bias: polar residues; that stretch reads RATSPSNNVD. Composition is skewed to basic residues over residues 73 to 82 and 120 to 129; these read SKRKKKKKSC and EKKKKRRKSL. Lys140 participates in a covalent cross-link: Glycyl lysine isopeptide (Lys-Gly) (interchain with G-Cter in SUMO2). Residue Ser142 is modified to Phosphoserine. A compositionally biased stretch (basic and acidic residues) spans 143-153; the sequence is PDPKHAKEVSK. Basic residues-rich tracts occupy residues 154 to 165 and 204 to 222; these read AGRKSKKQRKEK and QKRK…KKKT. Lys250 is covalently cross-linked (Glycyl lysine isopeptide (Lys-Gly) (interchain with G-Cter in SUMO1); alternate). Residue Lys250 forms a Glycyl lysine isopeptide (Lys-Gly) (interchain with G-Cter in SUMO2); alternate linkage. Residues 258-314 are disordered; sequence PIDSPKAPGKKKVKSKKKVEQPVGEGLAVKRKKKKKKRKENGVKEDPWQEEKEESDT. Ser261 is subject to Phosphoserine. The segment covering 265-274 has biased composition (basic residues); that stretch reads PGKKKVKSKK. Glycyl lysine isopeptide (Lys-Gly) (interchain with G-Cter in SUMO2) cross-links involve residues Lys275 and Lys287. Residues 286–296 are compositionally biased toward basic residues; that stretch reads VKRKKKKKKRK. A compositionally biased stretch (basic and acidic residues) spans 297-307; the sequence is ENGVKEDPWQE. Residue Lys309 forms a Glycyl lysine isopeptide (Lys-Gly) (interchain with G-Cter in SUMO2) linkage. The tract at residues 310 to 478 is interaction with ZNF106; it reads EESDTDLEVV…NASKSIKLQD (169 aa). At Ser312 the chain carries Phosphoserine. The residue at position 314 (Thr314) is a Phosphothreonine. Lys323 participates in a covalent cross-link: Glycyl lysine isopeptide (Lys-Gly) (interchain with G-Cter in SUMO2). Residues 340 to 357 show a composition bias toward basic and acidic residues; the sequence is QEEIDRESGKTEASEPKK. Residues 340-378 are disordered; it reads QEEIDRESGKTEASEPKKWTVGLSVKTEASEPKKWTGTQ. Residues Lys373, Lys393, Lys395, Lys427, and Lys462 each participate in a glycyl lysine isopeptide (Lys-Gly) (interchain with G-Cter in SUMO2) cross-link.

Interacts with ZNF106. Expressed in testis.

The protein resides in the nucleus. Its subcellular location is the nucleolus. The sequence is that of Lysine-rich nucleolar protein 1 (Knop1) from Mus musculus (Mouse).